The primary structure comprises 281 residues: Splicing regulator RBM11 (281 aa).

Residues 10–87 enclose the RRM domain; sequence RTVFVGNLEA…RPINVQYRFG (78 aa). The segment at 184 to 281 is disordered; the sequence is PSSYKWTHQQ…FRKSKKKKRY (98 aa). Composition is skewed to polar residues over residues 187–217 and 229–242; these read YKWT…SSLN and YKWT…SDLY. Residues 245-280 carry the Bipartite nuclear localization signal motif; the sequence is NKRKRQKQTSDSDSSTDNNRGNECSQKFRKSKKKKR. Residues 271 to 281 show a composition bias toward basic residues; the sequence is KFRKSKKKKRY.

As to quaternary structure, homodimer. As to expression, expressed in brain, hippocampus, prefrontal cortex, cerebellum, spinal cord, testis, mammary gland, spleen and kidney. Also expressed in fetal brain.

It is found in the nucleus. Its subcellular location is the nucleoplasm. The protein localises to the nucleus speckle. Its function is as follows. Tissue-specific splicing factor with potential implication in the regulation of alternative splicing during neuron and germ cell differentiation. Antagonizes SRSF1-mediated BCL-X splicing. May affect the choice of alternative 5' splice sites by binding to specific sequences in exons and antagonizing the SR protein SRSF1. The protein is Splicing regulator RBM11 of Homo sapiens (Human).